The primary structure comprises 436 residues: T-box transcription factor TBX6 (436 aa).

A disordered region spans residues 67–87; it reads PLLPSALGPETAPPPPEALHS. A DNA-binding region (T-box) is located at residues 100–273; the sequence is LWKEFSAVGT…ANPFAKGFRE (174 aa). Basic and acidic residues predominate over residues 275 to 284; it reads GRNCKRERDA. Disordered stretches follow at residues 275–344 and 360–383; these read GRNC…CGGP and PSHL…APYS. Residues 332-344 show a composition bias toward low complexity; it reads EAASASAPPCGGP.

Its subcellular location is the nucleus. Functionally, T-box transcription factor that plays an essential role in the determination of the fate of axial stem cells: neural vs mesodermal. Acts in part by down-regulating, a specific enhancer (N1) of SOX2, to inhibit neural development. Seems to also play an essential role in left/right axis determination and acts through effects on Notch signaling around the node as well as through an effect on the morphology and motility of the nodal cilia. The polypeptide is T-box transcription factor TBX6 (Tbx6) (Rattus norvegicus (Rat)).